A 247-amino-acid chain; its full sequence is NAD(P)H-quinone oxidoreductase subunit K (247 aa).

Residues Cys-63, Cys-64, Cys-128, and Cys-159 each coordinate [4Fe-4S] cluster.

The protein belongs to the complex I 20 kDa subunit family. NDH-1 can be composed of about 15 different subunits; different subcomplexes with different compositions have been identified which probably have different functions. [4Fe-4S] cluster serves as cofactor.

It localises to the cellular thylakoid membrane. It catalyses the reaction a plastoquinone + NADH + (n+1) H(+)(in) = a plastoquinol + NAD(+) + n H(+)(out). The enzyme catalyses a plastoquinone + NADPH + (n+1) H(+)(in) = a plastoquinol + NADP(+) + n H(+)(out). NDH-1 shuttles electrons from an unknown electron donor, via FMN and iron-sulfur (Fe-S) centers, to quinones in the respiratory and/or the photosynthetic chain. The immediate electron acceptor for the enzyme in this species is believed to be plastoquinone. Couples the redox reaction to proton translocation, and thus conserves the redox energy in a proton gradient. Cyanobacterial NDH-1 also plays a role in inorganic carbon-concentration. This Microcystis aeruginosa (strain NIES-843 / IAM M-2473) protein is NAD(P)H-quinone oxidoreductase subunit K.